The following is a 278-amino-acid chain: Sulfate transport system permease protein CysT (278 aa).

7 helical membrane passes run 22-42 (FTWV…FLKS), 67-87 (FGLS…IAWV), 102-122 (FIDL…ATVY), 139-159 (IAFT…PFVV), 188-208 (FWRV…AQGF), 217-237 (SVVI…VLIF), and 246-266 (AGAT…LFVI). One can recognise an ABC transmembrane type-1 domain in the interval 63–266 (YEVTFGLSLA…LFSLVILFVI (204 aa)).

Belongs to the binding-protein-dependent transport system permease family. CysTW subfamily. In terms of assembly, the complex is composed of two ATP-binding proteins (CysA), two transmembrane proteins (CysT and CysW) and a solute-binding protein (CysP).

Its subcellular location is the cell inner membrane. Its function is as follows. Part of the ABC transporter complex CysAWTP (TC 3.A.1.6.1) involved in sulfate/thiosulfate import. Probably responsible for the translocation of the substrate across the membrane. The protein is Sulfate transport system permease protein CysT (cysT) of Synechococcus elongatus (strain ATCC 33912 / PCC 7942 / FACHB-805) (Anacystis nidulans R2).